Consider the following 373-residue polypeptide: Chaperone protein DnaJ (373 aa).

The region spanning 5–70 (DYYEVLGVAK…QKRAAYDRYG (66 aa)) is the J domain. The segment at 133-211 (GFDTEIRVPS…CDGVGRTRRN (79 aa)) adopts a CR-type zinc-finger fold. Positions 146, 149, 163, 166, 185, 188, 199, and 202 each coordinate Zn(2+). 4 CXXCXGXG motif repeats span residues 146–153 (CDTCHGSG), 163–170 (CRTCGGSG), 185–192 (CPTCHGTG), and 199–206 (CPSCDGVG).

It belongs to the DnaJ family. As to quaternary structure, homodimer. Zn(2+) is required as a cofactor.

The protein localises to the cytoplasm. Functionally, participates actively in the response to hyperosmotic and heat shock by preventing the aggregation of stress-denatured proteins and by disaggregating proteins, also in an autonomous, DnaK-independent fashion. Unfolded proteins bind initially to DnaJ; upon interaction with the DnaJ-bound protein, DnaK hydrolyzes its bound ATP, resulting in the formation of a stable complex. GrpE releases ADP from DnaK; ATP binding to DnaK triggers the release of the substrate protein, thus completing the reaction cycle. Several rounds of ATP-dependent interactions between DnaJ, DnaK and GrpE are required for fully efficient folding. Also involved, together with DnaK and GrpE, in the DNA replication of plasmids through activation of initiation proteins. The sequence is that of Chaperone protein DnaJ from Bordetella bronchiseptica (strain ATCC BAA-588 / NCTC 13252 / RB50) (Alcaligenes bronchisepticus).